Reading from the N-terminus, the 169-residue chain is Crossover junction endodeoxyribonuclease RuvC (169 aa).

Catalysis depends on residues Asp-11, Glu-71, and Asp-143. Mg(2+) is bound by residues Asp-11, Glu-71, and Asp-143.

It belongs to the RuvC family. Homodimer which binds Holliday junction (HJ) DNA. The HJ becomes 2-fold symmetrical on binding to RuvC with unstacked arms; it has a different conformation from HJ DNA in complex with RuvA. In the full resolvosome a probable DNA-RuvA(4)-RuvB(12)-RuvC(2) complex forms which resolves the HJ. Requires Mg(2+) as cofactor.

It is found in the cytoplasm. It carries out the reaction Endonucleolytic cleavage at a junction such as a reciprocal single-stranded crossover between two homologous DNA duplexes (Holliday junction).. The RuvA-RuvB-RuvC complex processes Holliday junction (HJ) DNA during genetic recombination and DNA repair. Endonuclease that resolves HJ intermediates. Cleaves cruciform DNA by making single-stranded nicks across the HJ at symmetrical positions within the homologous arms, yielding a 5'-phosphate and a 3'-hydroxyl group; requires a central core of homology in the junction. The consensus cleavage sequence is 5'-(A/T)TT(C/G)-3'. Cleavage occurs on the 3'-side of the TT dinucleotide at the point of strand exchange. HJ branch migration catalyzed by RuvA-RuvB allows RuvC to scan DNA until it finds its consensus sequence, where it cleaves and resolves the cruciform DNA. This Rhizobium etli (strain ATCC 51251 / DSM 11541 / JCM 21823 / NBRC 15573 / CFN 42) protein is Crossover junction endodeoxyribonuclease RuvC.